The chain runs to 331 residues: Serine/threonine-protein phosphatase PP1 isozyme 7 (331 aa).

Met1 is modified (N-acetylmethionine). Mn(2+) is bound by residues Asp60, His62, Asp88, and Asn120. The Proton donor role is filled by His121. Mn(2+) is bound by residues His169 and His244.

It belongs to the PPP phosphatase family. PP-1 subfamily. The cofactor is Mn(2+). In terms of tissue distribution, expressed in roots, rosettes and flowers.

Its subcellular location is the nucleus. It localises to the cytoplasm. The catalysed reaction is O-phospho-L-seryl-[protein] + H2O = L-seryl-[protein] + phosphate. It carries out the reaction O-phospho-L-threonyl-[protein] + H2O = L-threonyl-[protein] + phosphate. With respect to regulation, phosphatase activity is strongly reduced by the protein phosphatase inhibitor 2 (I-2). Functionally, serine/threonine-protein phosphatase that possesses phosphatase activity toward para-nitrophenyl phosphate (pNPP) in vitro. This is Serine/threonine-protein phosphatase PP1 isozyme 7 from Arabidopsis thaliana (Mouse-ear cress).